We begin with the raw amino-acid sequence, 251 residues long: UPF0246 protein TM1040_2658 (251 aa).

It belongs to the UPF0246 family.

In Ruegeria sp. (strain TM1040) (Silicibacter sp.), this protein is UPF0246 protein TM1040_2658.